Consider the following 137-residue polypeptide: Large ribosomal subunit protein uL16 (137 aa).

It belongs to the universal ribosomal protein uL16 family. As to quaternary structure, part of the 50S ribosomal subunit.

In terms of biological role, binds 23S rRNA and is also seen to make contacts with the A and possibly P site tRNAs. In Streptococcus uberis (strain ATCC BAA-854 / 0140J), this protein is Large ribosomal subunit protein uL16.